The sequence spans 126 residues: Large-conductance mechanosensitive channel (126 aa).

Helical transmembrane passes span 14–34 (VIDL…VNSL) and 66–86 (FITT…LVVV).

The protein belongs to the MscL family. As to quaternary structure, homopentamer.

Its subcellular location is the cell membrane. Channel that opens in response to stretch forces in the membrane lipid bilayer. May participate in the regulation of osmotic pressure changes within the cell. This chain is Large-conductance mechanosensitive channel, found in Roseiflexus sp. (strain RS-1).